A 54-amino-acid chain; its full sequence is Preprotein translocase subunit SecG (54 aa).

The Cytoplasmic portion of the chain corresponds to 1–31 (MSSGSNSGGLMSSAGLVRYFDSEDRDAIAID). A helical transmembrane segment spans residues 32–53 (PKTVLAFCVLFGVFVQILSLTV). Residue Ala54 is a topological domain, extracellular.

This sequence belongs to the SEC61-beta family. In terms of assembly, component of the protein translocase complex. Heterotrimer consisting of alpha (SecY), beta (SecG) and gamma (SecE) subunits. Can form oligomers of the heterotrimer.

The protein resides in the cell membrane. Functionally, involved in protein export. The function of the beta subunit is unknown, but it may be involved in stabilization of the trimeric complex. The chain is Preprotein translocase subunit SecG from Halorubrum lacusprofundi (strain ATCC 49239 / DSM 5036 / JCM 8891 / ACAM 34).